The sequence spans 545 residues: Lysine--tRNA ligase (545 aa).

The short motif at 41–49 (PSGVPHLGH) is the 'HIGH' region element. Positions 306–310 (ALSSS) match the 'KMSKS' region motif.

This sequence belongs to the class-I aminoacyl-tRNA synthetase family.

The protein resides in the cytoplasm. The enzyme catalyses tRNA(Lys) + L-lysine + ATP = L-lysyl-tRNA(Lys) + AMP + diphosphate. The sequence is that of Lysine--tRNA ligase from Natronomonas pharaonis (strain ATCC 35678 / DSM 2160 / CIP 103997 / JCM 8858 / NBRC 14720 / NCIMB 2260 / Gabara) (Halobacterium pharaonis).